A 213-amino-acid polypeptide reads, in one-letter code: Orotate phosphoribosyltransferase (213 aa).

Residue Lys26 coordinates 5-phospho-alpha-D-ribose 1-diphosphate. 34-35 (FF) lines the orotate pocket. 5-phospho-alpha-D-ribose 1-diphosphate contacts are provided by residues 72–73 (YK), Arg99, Lys100, Lys103, His105, and 124–132 (DDVITAGTA). Residues Thr128 and Arg156 each contribute to the orotate site.

The protein belongs to the purine/pyrimidine phosphoribosyltransferase family. PyrE subfamily. As to quaternary structure, homodimer. Requires Mg(2+) as cofactor.

The catalysed reaction is orotidine 5'-phosphate + diphosphate = orotate + 5-phospho-alpha-D-ribose 1-diphosphate. It participates in pyrimidine metabolism; UMP biosynthesis via de novo pathway; UMP from orotate: step 1/2. Catalyzes the transfer of a ribosyl phosphate group from 5-phosphoribose 1-diphosphate to orotate, leading to the formation of orotidine monophosphate (OMP). The sequence is that of Orotate phosphoribosyltransferase from Shigella dysenteriae serotype 1 (strain Sd197).